We begin with the raw amino-acid sequence, 565 residues long: NAD-dependent malic enzyme (565 aa).

Catalysis depends on Tyr-104, which acts as the Proton donor. Arg-157 is a binding site for NAD(+). Residue Lys-175 is the Proton acceptor of the active site. Glu-246, Asp-247, and Asp-270 together coordinate a divalent metal cation. Positions 270 and 418 each coordinate NAD(+).

Belongs to the malic enzymes family. As to quaternary structure, homotetramer. Requires Mg(2+) as cofactor. Mn(2+) is required as a cofactor.

The catalysed reaction is (S)-malate + NAD(+) = pyruvate + CO2 + NADH. It carries out the reaction oxaloacetate + H(+) = pyruvate + CO2. In Proteus mirabilis (strain HI4320), this protein is NAD-dependent malic enzyme.